The following is a 182-amino-acid chain: ATP synthase subunit delta 2 (182 aa).

It belongs to the ATPase delta chain family. In terms of assembly, F-type ATPases have 2 components, F(1) - the catalytic core - and F(0) - the membrane proton channel. F(1) has five subunits: alpha(3), beta(3), gamma(1), delta(1), epsilon(1). F(0) has three main subunits: a(1), b(2) and c(10-14). The alpha and beta chains form an alternating ring which encloses part of the gamma chain. F(1) is attached to F(0) by a central stalk formed by the gamma and epsilon chains, while a peripheral stalk is formed by the delta and b chains.

It is found in the cell inner membrane. Functionally, f(1)F(0) ATP synthase produces ATP from ADP in the presence of a proton or sodium gradient. F-type ATPases consist of two structural domains, F(1) containing the extramembraneous catalytic core and F(0) containing the membrane proton channel, linked together by a central stalk and a peripheral stalk. During catalysis, ATP synthesis in the catalytic domain of F(1) is coupled via a rotary mechanism of the central stalk subunits to proton translocation. This protein is part of the stalk that links CF(0) to CF(1). It either transmits conformational changes from CF(0) to CF(1) or is implicated in proton conduction. In Photobacterium profundum (strain SS9), this protein is ATP synthase subunit delta 2.